The following is a 150-amino-acid chain: Deoxyuridine 5'-triphosphate nucleotidohydrolase (150 aa).

Substrate is bound by residues 70–72, asparagine 82, 86–88, and methionine 96; these read RSG and LID.

The protein belongs to the dUTPase family. Mg(2+) is required as a cofactor.

The catalysed reaction is dUTP + H2O = dUMP + diphosphate + H(+). The protein operates within pyrimidine metabolism; dUMP biosynthesis; dUMP from dCTP (dUTP route): step 2/2. In terms of biological role, this enzyme is involved in nucleotide metabolism: it produces dUMP, the immediate precursor of thymidine nucleotides and it decreases the intracellular concentration of dUTP so that uracil cannot be incorporated into DNA. The polypeptide is Deoxyuridine 5'-triphosphate nucleotidohydrolase (Baumannia cicadellinicola subsp. Homalodisca coagulata).